Reading from the N-terminus, the 141-residue chain is 6,7-dimethyl-8-ribityllumazine synthase (141 aa).

5-amino-6-(D-ribitylamino)uracil contacts are provided by residues Phe-14, 46–48 (VFD), and 70–72 (CVI). 75-76 (ET) contacts (2S)-2-hydroxy-3-oxobutyl phosphate. His-78 serves as the catalytic Proton donor. Residue Leu-103 coordinates 5-amino-6-(D-ribitylamino)uracil. Residue Arg-118 participates in (2S)-2-hydroxy-3-oxobutyl phosphate binding.

As to quaternary structure, forms an icosahedral capsid composed of 60 subunits, arranged as a dodecamer of pentamers.

It catalyses the reaction (2S)-2-hydroxy-3-oxobutyl phosphate + 5-amino-6-(D-ribitylamino)uracil = 6,7-dimethyl-8-(1-D-ribityl)lumazine + phosphate + 2 H2O + H(+). The protein operates within cofactor biosynthesis; riboflavin biosynthesis; riboflavin from 2-hydroxy-3-oxobutyl phosphate and 5-amino-6-(D-ribitylamino)uracil: step 1/2. Functionally, catalyzes the formation of 6,7-dimethyl-8-ribityllumazine by condensation of 5-amino-6-(D-ribitylamino)uracil with 3,4-dihydroxy-2-butanone 4-phosphate. This is the penultimate step in the biosynthesis of riboflavin. The sequence is that of 6,7-dimethyl-8-ribityllumazine synthase (ribH) from Methanocaldococcus jannaschii (strain ATCC 43067 / DSM 2661 / JAL-1 / JCM 10045 / NBRC 100440) (Methanococcus jannaschii).